The following is a 258-amino-acid chain: NAD kinase (258 aa).

Residue Asp45 is the Proton acceptor of the active site. Residues 45 to 46 (DG), 117 to 118 (NE), Asp147, Ala155, 158 to 163 (TAYNYS), and Ala182 each bind NAD(+).

Belongs to the NAD kinase family. A divalent metal cation is required as a cofactor.

The protein resides in the cytoplasm. It catalyses the reaction NAD(+) + ATP = ADP + NADP(+) + H(+). In terms of biological role, involved in the regulation of the intracellular balance of NAD and NADP, and is a key enzyme in the biosynthesis of NADP. Catalyzes specifically the phosphorylation on 2'-hydroxyl of the adenosine moiety of NAD to yield NADP. In Xanthomonas oryzae pv. oryzae (strain MAFF 311018), this protein is NAD kinase.